Here is a 522-residue protein sequence, read N- to C-terminus: Maturase K (522 aa).

This sequence belongs to the intron maturase 2 family. MatK subfamily.

It localises to the plastid. Its subcellular location is the chloroplast. Its function is as follows. Usually encoded in the trnK tRNA gene intron. Probably assists in splicing its own and other chloroplast group II introns. The protein is Maturase K of Iris tenax (Oregon iris).